A 168-amino-acid chain; its full sequence is ATP synthase F(1) complex subunit delta, mitochondrial (168 aa).

A mitochondrion-targeting transit peptide spans 1–22; it reads MLPAALLRHPGLRRLVLQARTY. Lysine 136 and lysine 165 each carry N6-acetyllysine; alternate. Residues lysine 136 and lysine 165 each carry the N6-succinyllysine; alternate modification.

It belongs to the ATPase epsilon chain family. Component of the ATP synthase complex composed at least of ATP5F1A/subunit alpha, ATP5F1B/subunit beta, ATP5MC1/subunit c (homooctomer), MT-ATP6/subunit a, MT-ATP8/subunit 8, ATP5ME/subunit e, ATP5MF/subunit f, ATP5MG/subunit g, ATP5MK/subunit k, ATP5MJ/subunit j, ATP5F1C/subunit gamma, ATP5F1D/subunit delta, ATP5F1E/subunit epsilon, ATP5PF/subunit F6, ATP5PB/subunit b, ATP5PD/subunit d, ATP5PO/subunit OSCP. ATP synthase complex consists of a soluble F(1) head domain (subunits alpha(3) and beta(3)) - the catalytic core - and a membrane F(0) domain - the membrane proton channel (subunits c, a, 8, e, f, g, k and j). These two domains are linked by a central stalk (subunits gamma, delta, and epsilon) rotating inside the F1 region and a stationary peripheral stalk (subunits F6, b, d, and OSCP). Component of a complex composed at least by ATPIF1, ATP5F1A, ATP5F1B, ATP5F1C AND ATP5F1E.

The protein resides in the mitochondrion. It is found in the mitochondrion inner membrane. Functionally, subunit delta, of the mitochondrial membrane ATP synthase complex (F(1)F(0) ATP synthase or Complex V) that produces ATP from ADP in the presence of a proton gradient across the membrane which is generated by electron transport complexes of the respiratory chain. ATP synthase complex consist of a soluble F(1) head domain - the catalytic core - and a membrane F(1) domain - the membrane proton channel. These two domains are linked by a central stalk rotating inside the F(1) region and a stationary peripheral stalk. During catalysis, ATP synthesis in the catalytic domain of F(1) is coupled via a rotary mechanism of the central stalk subunits to proton translocation. In vivo, can only synthesize ATP although its ATP hydrolase activity can be activated artificially in vitro. With the central stalk subunit gamma, is essential for the biogenesis of F(1) catalytic part of the ATP synthase complex namely in the formation of F1 assembly intermediate. This is ATP synthase F(1) complex subunit delta, mitochondrial from Rattus norvegicus (Rat).